We begin with the raw amino-acid sequence, 450 residues long: ATP-dependent protease ATPase subunit HslU (450 aa).

ATP-binding positions include Val-29, 71–76 (GVGKTE), Asp-261, Glu-328, and Arg-400.

This sequence belongs to the ClpX chaperone family. HslU subfamily. As to quaternary structure, a double ring-shaped homohexamer of HslV is capped on each side by a ring-shaped HslU homohexamer. The assembly of the HslU/HslV complex is dependent on binding of ATP.

The protein localises to the cytoplasm. Functionally, ATPase subunit of a proteasome-like degradation complex; this subunit has chaperone activity. The binding of ATP and its subsequent hydrolysis by HslU are essential for unfolding of protein substrates subsequently hydrolyzed by HslV. HslU recognizes the N-terminal part of its protein substrates and unfolds these before they are guided to HslV for hydrolysis. The chain is ATP-dependent protease ATPase subunit HslU from Rickettsia rickettsii (strain Iowa).